The following is a 558-amino-acid chain: Kelch-like protein 23 (558 aa).

Residues 36–104 (TDITLQCPSG…AYTSQIEITK (69 aa)) enclose the BTB domain. One can recognise a BACK domain in the interval 139–240 (CIGMHSFAEF…DPVYLKTALG (102 aa)). Kelch repeat units lie at residues 274–320 (TMYI…CLGP), 321–369 (NIYV…TLGG), 370–416 (CVYA…VLHE), 418–466 (IYVI…PFEN), 467–508 (KLYL…IMNG), and 510–557 (IYVT…CVYN).

The polypeptide is Kelch-like protein 23 (Klhl23) (Mus musculus (Mouse)).